The primary structure comprises 188 residues: uncharacterized protein (188 aa).

A signal peptide spans 1 to 18 (MTLRIIAHLLALTASLAG). The N-palmitoyl cysteine moiety is linked to residue C19. A lipid anchor (S-diacylglycerol cysteine) is attached at C19.

The protein localises to the cell membrane. This is an uncharacterized protein from Sinorhizobium fredii (strain NBRC 101917 / NGR234).